Consider the following 294-residue polypeptide: Phosphoribosylaminoimidazole-succinocarboxamide synthase (294 aa).

It belongs to the SAICAR synthetase family.

It carries out the reaction 5-amino-1-(5-phospho-D-ribosyl)imidazole-4-carboxylate + L-aspartate + ATP = (2S)-2-[5-amino-1-(5-phospho-beta-D-ribosyl)imidazole-4-carboxamido]succinate + ADP + phosphate + 2 H(+). The protein operates within purine metabolism; IMP biosynthesis via de novo pathway; 5-amino-1-(5-phospho-D-ribosyl)imidazole-4-carboxamide from 5-amino-1-(5-phospho-D-ribosyl)imidazole-4-carboxylate: step 1/2. This Thermoplasma volcanium (strain ATCC 51530 / DSM 4299 / JCM 9571 / NBRC 15438 / GSS1) protein is Phosphoribosylaminoimidazole-succinocarboxamide synthase.